Reading from the N-terminus, the 272-residue chain is Putative phosphoenolpyruvate synthase regulatory protein (272 aa).

152–159 is an ADP binding site; that stretch reads GVSRCGKT.

The protein belongs to the pyruvate, phosphate/water dikinase regulatory protein family. PSRP subfamily.

It carries out the reaction [pyruvate, water dikinase] + ADP = [pyruvate, water dikinase]-phosphate + AMP + H(+). The catalysed reaction is [pyruvate, water dikinase]-phosphate + phosphate + H(+) = [pyruvate, water dikinase] + diphosphate. Its function is as follows. Bifunctional serine/threonine kinase and phosphorylase involved in the regulation of the phosphoenolpyruvate synthase (PEPS) by catalyzing its phosphorylation/dephosphorylation. The sequence is that of Putative phosphoenolpyruvate synthase regulatory protein from Pseudomonas savastanoi pv. phaseolicola (strain 1448A / Race 6) (Pseudomonas syringae pv. phaseolicola (strain 1448A / Race 6)).